The sequence spans 206 residues: Ras-related protein Rab-18 (206 aa).

At Met1 the chain carries N-acetylmethionine. GTP is bound by residues Ser17, Gly20, Lys21, Ser22, Ser23, Asp34, Pro35, Thr40, Gly66, Lys123, and Asp125. Ser22 contributes to the Mg(2+) binding site. 2 short sequence motifs (switch) span residues 31 to 45 and 63 to 80; these read DTFD…GVDF and DTAG…YYRG. Residue Thr40 participates in Mg(2+) binding. Phosphoserine is present on Ser144. GTP is bound at residue Ala152. Cys199 is lipidated: S-palmitoyl cysteine. The residue at position 203 (Cys203) is a Cysteine methyl ester. Cys203 is lipidated: S-geranylgeranyl cysteine. Positions 204–206 are cleaved as a propeptide — removed in mature form; that stretch reads SVL.

The protein belongs to the small GTPase superfamily. Rab family. As to quaternary structure, interacts (in GTP-bound form) with ZFYVE1. Interacts with ZW10 and this interaction is enhanced in the presence of ZFYVE1. Interacts with BSCL2. The cofactor is Mg(2+). Expression is high in the brain, moderate in the pituitary, and low in the liver. Detected in all tissues. Highly enriched on apical endocytic structures in polarized epithelial cells of kidney proximal tubules. Detected on both the apical and basolateral domains in epithelial cells of the intestine.

It localises to the endoplasmic reticulum membrane. Its subcellular location is the golgi apparatus. It is found in the cis-Golgi network membrane. The protein resides in the lipid droplet. The protein localises to the apical cell membrane. It carries out the reaction GTP + H2O = GDP + phosphate + H(+). Regulated by guanine nucleotide exchange factor (GEF) RAB3GAP1-RAB3GAP2 complex at the cis-Golgi membrane which promotes the exchange of bound GDP for free GTP. Regulated by GTPase activating protein (GAP) TBC1D20 at the ER membrane which increases the GTP hydrolysis activity. Inhibited by GDP dissociation inhibitors (GDIs) which prevent Rab-GDP dissociation. Its function is as follows. The small GTPases Rab are key regulators of intracellular membrane trafficking, from the formation of transport vesicles to their fusion with membranes. Rabs cycle between an inactive GDP-bound form and an active GTP-bound form that is able to recruit to membranes different sets of downstream effectors directly responsible for vesicle formation, movement, tethering and fusion. RAB18 is required for the localization of ZFYVE1 to lipid droplets and for its function in mediating the formation of endoplasmic reticulum-lipid droplets (ER-LD) contacts. Also required for maintaining endoplasmic reticulum structure. Plays a role in apical endocytosis/recycling. Plays a key role in eye and brain development and neurodegeneration. In Mus musculus (Mouse), this protein is Ras-related protein Rab-18.